Consider the following 371-residue polypeptide: 2-aminoethylphosphonate--pyruvate transaminase (371 aa).

Residue K198 is modified to N6-(pyridoxal phosphate)lysine.

Belongs to the class-V pyridoxal-phosphate-dependent aminotransferase family. PhnW subfamily. Homodimer. It depends on pyridoxal 5'-phosphate as a cofactor.

It catalyses the reaction (2-aminoethyl)phosphonate + pyruvate = phosphonoacetaldehyde + L-alanine. Its function is as follows. Involved in phosphonate degradation. This chain is 2-aminoethylphosphonate--pyruvate transaminase, found in Syntrophobacter fumaroxidans (strain DSM 10017 / MPOB).